A 35-amino-acid polypeptide reads, in one-letter code: Potassium channel toxin alpha-KTx 6.15 (35 aa).

4 cysteine pairs are disulfide-bonded: Cys-3/Cys-24, Cys-9/Cys-29, Cys-13/Cys-31, and Cys-19/Cys-34.

The protein belongs to the short scorpion toxin superfamily. Potassium channel inhibitor family. Alpha-KTx 06 subfamily. Expressed by the venom gland.

It localises to the secreted. Functionally, blocks voltage-gated potassium channels rKv1.1/KCNA1 (IC(50)=13 nM), rKv1.2/KCNA2 (IC(50)=16 nM) and rKv1.3/KCNA3 (IC(50)=2 nM). The sequence is that of Potassium channel toxin alpha-KTx 6.15 from Hemiscorpius lepturus (Scorpion).